Consider the following 265-residue polypeptide: Phosphonates import ATP-binding protein PhnC (265 aa).

The ABC transporter domain maps to 3 to 247; that stretch reads LRLKQAFLHH…MLDTLYANEQ (245 aa). 36-43 contacts ATP; it reads GPSGAGKS.

This sequence belongs to the ABC transporter superfamily. Phosphonates importer (TC 3.A.1.9.1) family. As to quaternary structure, the complex is composed of two ATP-binding proteins (PhnC), two transmembrane proteins (PhnE) and a solute-binding protein (PhnD).

It is found in the cell inner membrane. The catalysed reaction is phosphonate(out) + ATP + H2O = phosphonate(in) + ADP + phosphate + H(+). Functionally, part of the ABC transporter complex PhnCDE involved in phosphonates import. Responsible for energy coupling to the transport system. This Pseudomonas fluorescens (strain Pf0-1) protein is Phosphonates import ATP-binding protein PhnC.